The following is a 232-amino-acid chain: 26.5 kDa heat shock protein, mitochondrial (232 aa).

The transit peptide at 1-42 (MALARLALRNLQQKLSPSLMGQSCERGLVGNRHNPMKLNRFM) directs the protein to the mitochondrion. The segment at 44–82 (TSAGEQEDKMNTEVSVSEKKSPRQNFPRRRGRKSLWRNT) is disordered. Positions 49–64 (QEDKMNTEVSVSEKKS) are enriched in basic and acidic residues. A compositionally biased stretch (basic residues) spans 69-78 (FPRRRGRKSL). The sHSP domain occupies 114-232 (IFDNFNVNPF…KKNVQEISVE (119 aa)).

The protein belongs to the small heat shock protein (HSP20) family. As to quaternary structure, may form oligomeric structures.

Its subcellular location is the mitochondrion. In Arabidopsis thaliana (Mouse-ear cress), this protein is 26.5 kDa heat shock protein, mitochondrial (HSP26.5).